Consider the following 105-residue polypeptide: Membrane-stabilizing protein A (105 aa).

A helical membrane pass occupies residues 1-21 (MQFYLILLAILYLIVSFISIF). Topologically, residues 22–29 (KMEVVFTR) are cytoplasmic. A helical membrane pass occupies residues 30 to 50 (ILRIIMGVLLLFVLALTTMSF). Topologically, residues 51-55 (PKENW) are extracellular. Residues 56–76 (WVFIVLLLLVGNVEVTGFKML) form a helical membrane-spanning segment. The Cytoplasmic segment spans residues 77 to 84 (KKDLKGVN). Residues 85–105 (ILNLMSLFIFVIYFILTIVLF) form a helical membrane-spanning segment.

The protein belongs to the MspA family.

The protein resides in the membrane. Functionally, plays a role in toxin production, resistance to host innate immune mechanisms, and iron homeostasis. This is Membrane-stabilizing protein A from Staphylococcus aureus (strain NCTC 8325 / PS 47).